The sequence spans 333 residues: DNA-directed RNA polymerase subunit alpha (333 aa).

The tract at residues 1–233 is alpha N-terminal domain (alpha-NTD); the sequence is MVREKVKVST…NLFIPFLHVE (233 aa). Residues 267–333 form an alpha C-terminal domain (alpha-CTD) region; sequence LVFQYIFIDQ…LEKNRKFISN (67 aa).

Belongs to the RNA polymerase alpha chain family. In plastids the minimal PEP RNA polymerase catalytic core is composed of four subunits: alpha, beta, beta', and beta''. When a (nuclear-encoded) sigma factor is associated with the core the holoenzyme is formed, which can initiate transcription.

It is found in the plastid. The protein localises to the chloroplast. It carries out the reaction RNA(n) + a ribonucleoside 5'-triphosphate = RNA(n+1) + diphosphate. In terms of biological role, DNA-dependent RNA polymerase catalyzes the transcription of DNA into RNA using the four ribonucleoside triphosphates as substrates. The protein is DNA-directed RNA polymerase subunit alpha of Aethionema grandiflorum (Persian stone-cress).